A 785-amino-acid polypeptide reads, in one-letter code: Cation/H(+) antiporter 1 (785 aa).

Helical transmembrane passes span 19–39, 44–64, 79–99, 112–132, 143–163, 179–199, 201–221, 240–260, 294–314, 323–343, 352–372, and 389–409; these read LNTM…FYLF, GQAG…LTII, YYIF…GLEI, IVIT…FLWF, FLTF…PVVI, LAIS…TIVL, FISG…GVII, YLSK…ALTI, YPIH…RFSV, LVLG…VLFA, QYWL…LVLL, and MFVA…SLLL.

It belongs to the monovalent cation:proton antiporter 2 (CPA2) transporter (TC 2.A.37) family. CHX (TC 2.A.37.4) subfamily. As to expression, specifically expressed in pollen.

Its subcellular location is the membrane. In terms of biological role, may operate as a cation/H(+) antiporter. The polypeptide is Cation/H(+) antiporter 1 (CHX1) (Arabidopsis thaliana (Mouse-ear cress)).